We begin with the raw amino-acid sequence, 414 residues long: MLAKQIKKANSRSTLLRKSLLFAAPIILAVSSSSVYALTQVSNFGTNPGNLQMFKHVPSGMPANAPLVVALHGCTQTAAAYEASGWSALGNTHKFYVVYPQQQSGNNSNKCFNWFEPGDITRGQGEALSIKQMVDNMKANHSIDPSRVYVTGLSAGAFMTTVMAATYPDVFAGAAPIAGGPYKCATSMTSAFTCMSPGVDKTPAAWGDLARGGYSGYNGPKPKISIWHGSSDYTVAPANQNETVEQFTNYHGIDQTPDVSDTVGGFPHKVYKSANGTPLVETYTITGMGHGTPVDPGTGANQCGTAGAYILDVNVCSSYYIGQFFGIIGGGGTTTTTTSGNVTTTTAATTTTTTATQGYTQTTSATVTNHYVAGRINVTQYNVLGARYGYVTTIPLYYCPSLSGWTDKANCSPI.

The first 37 residues, 1–37, serve as a signal peptide directing secretion; sequence MLAKQIKKANSRSTLLRKSLLFAAPIILAVSSSSVYA. S154 acts as the Charge relay system in catalysis.

The protein belongs to the AB hydrolase superfamily. Lipase family.

The protein localises to the secreted. Specific for poly(hydroxyalkanoic acid) consisting of monomers of four or five carbon atoms and for P-nitrophenylbutyrate as substrates. This Paucimonas lemoignei (Pseudomonas lemoignei) protein is Poly(3-hydroxyalkanoate) depolymerase C (phaZ1).